A 303-amino-acid chain; its full sequence is Probable endonuclease 4 (303 aa).

Zn(2+)-binding residues include His75, His115, Glu151, Asp185, His188, His221, Asp234, His236, and Glu266.

The protein belongs to the AP endonuclease 2 family. Zn(2+) is required as a cofactor.

The catalysed reaction is Endonucleolytic cleavage to 5'-phosphooligonucleotide end-products.. Endonuclease IV plays a role in DNA repair. It cleaves phosphodiester bonds at apurinic or apyrimidinic (AP) sites, generating a 3'-hydroxyl group and a 5'-terminal sugar phosphate. The sequence is that of Probable endonuclease 4 from Ureaplasma parvum serovar 3 (strain ATCC 700970).